The chain runs to 546 residues: Probable protein kinase UbiB (546 aa).

Residues 124–502 enclose the Protein kinase domain; sequence DFEIKPLASA…HVRQGQSRYF (379 aa). ATP is bound by residues 130-138 and lysine 153; that span reads LASASIAQV. Aspartate 288 serves as the catalytic Proton acceptor. Transmembrane regions (helical) follow at residues 501–521 and 522–542; these read YFLGIGATLVLSGTFLLVSRP and EWGLMPVWLMAGGLIAWFVGW.

This sequence belongs to the ABC1 family. UbiB subfamily.

Its subcellular location is the cell inner membrane. The protein operates within cofactor biosynthesis; ubiquinone biosynthesis [regulation]. Is probably a protein kinase regulator of UbiI activity which is involved in aerobic coenzyme Q (ubiquinone) biosynthesis. In Escherichia coli (strain SMS-3-5 / SECEC), this protein is Probable protein kinase UbiB.